A 78-amino-acid polypeptide reads, in one-letter code: U29-theraphotoxin-Cg1a (78 aa).

A signal peptide spans 1 to 19 (MRYQTVFWILLIALCTVNP). Cystine bridges form between Cys42–Cys56, Cys49–Cys60, Cys55–Cys77, and Cys67–Cys73.

Belongs to the neurotoxin 13 (insecticidal toxin ABC) family. 03 (JZTX-59) subfamily. As to expression, expressed by the venom gland.

The protein resides in the secreted. Probable ion channel inhibitor. This chain is U29-theraphotoxin-Cg1a, found in Chilobrachys guangxiensis (Chinese earth tiger tarantula).